Consider the following 375-residue polypeptide: Alcohol dehydrogenase class-3 chain H (375 aa).

An N-acetylalanine modification is found at Ala1. Residues Cys46, His68, Cys98, Cys101, Cys104, Cys112, and Cys175 each contribute to the Zn(2+) site.

It belongs to the zinc-containing alcohol dehydrogenase family. Class-III subfamily. Homodimer or heterodimer with L chain. Zn(2+) is required as a cofactor.

Its subcellular location is the cytoplasm. It catalyses the reaction a primary alcohol + NAD(+) = an aldehyde + NADH + H(+). It carries out the reaction a secondary alcohol + NAD(+) = a ketone + NADH + H(+). The catalysed reaction is S-(hydroxymethyl)glutathione + NADP(+) = S-formylglutathione + NADPH + H(+). The enzyme catalyses S-(hydroxymethyl)glutathione + NAD(+) = S-formylglutathione + NADH + H(+). Functionally, class-III ADH is remarkably ineffective in oxidizing ethanol, but it readily catalyzes the oxidation of long-chain primary alcohols and the oxidation of S-(hydroxymethyl) glutathione. The protein is Alcohol dehydrogenase class-3 chain H of Gadus morhua (Atlantic cod).